An 864-amino-acid polypeptide reads, in one-letter code: Disintegrin and metalloproteinase domain-containing protein 15 (864 aa).

Residues 1 to 17 form the signal peptide; that stretch reads MRLALLWALGLLGAGSP. The tract at residues 18-45 is disordered; it reads RPSPPLPNIGGTEEEQQASPERTLSGSM. A propeptide spanning residues 18–207 is cleaved from the precursor; it reads RPSPPLPNIG…EQHHAHRLKR (190 aa). Residues 34–45 are compositionally biased toward polar residues; that stretch reads QASPERTLSGSM. Positions 177–184 match the Cysteine switch motif; it reads HTCAPSWH. Cys179 provides a ligand contact to Zn(2+). The Extracellular portion of the chain corresponds to 208–696; sequence DVVTETKIVE…TQLKATSSLT (489 aa). The Peptidase M12B domain occupies 214–415; that stretch reads KIVELVIVAD…GMGSCLFERQ (202 aa). The N-linked (GlcNAc...) asparagine glycan is linked to Asn238. Disulfide bonds link Cys324–Cys410, Cys366–Cys394, Cys368–Cys377, and Cys481–Cys501. Position 349 (His349) interacts with Zn(2+). Residue Glu350 is part of the active site. Zn(2+) contacts are provided by His353 and His359. N-linked (GlcNAc...) asparagine glycosylation is found at Asn390 and Asn393. The Disintegrin domain maps to 422 to 509; it reads SSLCGNMFVD…QCPSDIRLGD (88 aa). N-linked (GlcNAc...) asparagine glycosylation is found at Asn607 and Asn612. 3 cysteine pairs are disulfide-bonded: Cys658–Cys668, Cys662–Cys674, and Cys676–Cys685. An EGF-like domain is found at 658-686; the sequence is CRRKCHGHGVCDSSGHCRCEEGWAPPDCM. Residues 697–717 form a helical membrane-spanning segment; that stretch reads TGLLLSLLLLLVLVLLGASYW. Phosphotyrosine; by HCK and LCK occurs at positions 716 and 736. At 718-864 the chain is on the cytoplasmic side; it reads HRARLHQRLC…PPPAASSLYL (147 aa). A disordered region spans residues 736–864; the sequence is YRAPQSCPPE…PPPAASSLYL (129 aa). Positions 741-750 are enriched in pro residues; the sequence is SCPPERPGPP. Polar residues predominate over residues 752 to 762; the sequence is RAQQMTGTKQA. 2 stretches are compositionally biased toward pro residues: residues 768 to 780 and 814 to 825; these read PVPP…PNPV and TKPPPPRKPLPA. 2 consecutive short sequence motifs (SH3-binding) follow at residues 816–822 and 851–857; these read PPPPRKP and RPAPPPP.

Interacts specifically with Src family protein-tyrosine kinases (PTKs). Interacts with ITAGV-ITGB3 (vitronectin receptor). Interacts with SH3GL2 and SNX9; this interaction occurs preferentially with ADAM15 precursor, rather than the processed form, suggesting it occurs in a secretory pathway compartment prior to the medial Golgi. Interacts with ITAG9-ITGB1. Interacts with SH3PXD2A. Interacts with ITAGV-ITGB1. Interacts with GRB2, HCK, ITSN1, ITSN2, LYN, MAPK1, MAPK3, NCF1, NCK1, nephrocystin, PTK6, SNX33, LCK and SRC. Zn(2+) serves as cofactor. Post-translationally, the precursor is cleaved by a furin endopeptidase. An additional membrane proximal site of cleavage affects a small percentage of the proteins and results in disulfide-linked fragments. The prodomain is apparently cleaved in several positions that are N-terminal of the furin cleavage site. In terms of processing, may be partially sialylated. Phosphorylation increases association with PTKs. Expressed moderately in pericytes of retina. Expressed in testis and in spermatozoa from the caput, corpus, and cauda epididymis, as well as in non-capacitated and acrosome-reacted sperm (at protein level). Highly expressed in heart, brain, lung, and kidney. Expressed at lower levels in spleen, liver, testis and muscle.

The protein resides in the endomembrane system. Its subcellular location is the cell junction. It localises to the adherens junction. It is found in the cell projection. The protein localises to the cilium. The protein resides in the flagellum. Its subcellular location is the cytoplasmic vesicle. It localises to the secretory vesicle. It is found in the acrosome. Its function is as follows. Active metalloproteinase with gelatinolytic and collagenolytic activity. Plays a role in the wound healing process. Mediates both heterotypic intraepithelial cell/T-cell interactions and homotypic T-cell aggregation. Inhibits beta-1 integrin-mediated cell adhesion and migration of airway smooth muscle cells. Suppresses cell motility on or towards fibronectin possibly by driving alpha-v/beta-1 integrin (ITAGV-ITGB1) cell surface expression via ERK1/2 inactivation. Cleaves E-cadherin in response to growth factor deprivation. Plays a role in glomerular cell migration. Plays a role in pathological neovascularization. May play a role in cartilage remodeling. May be proteolytically processed, during sperm epididymal maturation and the acrosome reaction. May play a role in sperm-egg binding through its disintegrin domain. Interactions with egg membrane could be mediated via binding between the disintegrin-like domain to one or more integrin receptors on the egg. The protein is Disintegrin and metalloproteinase domain-containing protein 15 (Adam15) of Mus musculus (Mouse).